We begin with the raw amino-acid sequence, 349 residues long: Dihydroorotase (349 aa).

Zn(2+)-binding residues include histidine 17 and histidine 19. Substrate contacts are provided by residues 19–21 (HLR) and asparagine 45. The Zn(2+) site is built by lysine 103, histidine 140, and histidine 178. Position 103 is an N6-carboxylysine (lysine 103). Residue histidine 140 participates in substrate binding. Position 224 (leucine 224) interacts with substrate. A Zn(2+)-binding site is contributed by aspartate 252. Aspartate 252 is a catalytic residue. The substrate site is built by histidine 256 and alanine 268.

The protein belongs to the metallo-dependent hydrolases superfamily. DHOase family. Class II DHOase subfamily. Homodimer. Zn(2+) is required as a cofactor.

It carries out the reaction (S)-dihydroorotate + H2O = N-carbamoyl-L-aspartate + H(+). Its pathway is pyrimidine metabolism; UMP biosynthesis via de novo pathway; (S)-dihydroorotate from bicarbonate: step 3/3. Its function is as follows. Catalyzes the reversible cyclization of carbamoyl aspartate to dihydroorotate. The chain is Dihydroorotase from Buchnera aphidicola subsp. Schizaphis graminum (strain Sg).